The following is an 802-amino-acid chain: Oleate activated transcription factor 3 (802 aa).

Positions 19 to 47 (CTNCKKRKSKCDRGKPCSNCTRIGIENSC) form a DNA-binding region, zn(2)-C6 fungal-type. A compositionally biased stretch (polar residues) spans 749 to 768 (TSQQDSLASAGTNRTNNIAT). Positions 749 to 779 (TSQQDSLASAGTNRTNNIATNSGSGDDGGNG) are disordered.

The protein belongs to the OAF3 family.

The protein localises to the cytoplasm. It is found in the nucleus. Its subcellular location is the mitochondrion. Functionally, transcriptional inhibitor with a significantly increased number of target genes in response to oleate. In Vanderwaltozyma polyspora (strain ATCC 22028 / DSM 70294 / BCRC 21397 / CBS 2163 / NBRC 10782 / NRRL Y-8283 / UCD 57-17) (Kluyveromyces polysporus), this protein is Oleate activated transcription factor 3 (OAF3).